A 418-amino-acid chain; its full sequence is Vasopressin V1a receptor (418 aa).

A disordered region spans residues Met1–Arg43. Residues Met1–Lys52 lie on the Extracellular side of the membrane. N-linked (GlcNAc...) asparagine glycosylation occurs at Asn27. A helical membrane pass occupies residues Leu53 to Leu76. Over His77–Leu88 the chain is Cytoplasmic. The helical transmembrane segment at Phe89–Cys110 threads the bilayer. The Extracellular segment spans residues Trp111–Arg125. A disulfide bond links Cys124 and Cys203. The chain crosses the membrane as a helical span at residues Val126–Ala147. Over Asp148 to Arg168 the chain is Cytoplasmic. The chain crosses the membrane as a helical span at residues Leu169–Ser190. At Met191 to Thr218 the chain is on the extracellular side. Asn196 carries an N-linked (GlcNAc...) asparagine glycan. Residues Trp219–Ile239 traverse the membrane as a helical segment. Topologically, residues Cys240–Thr293 are cytoplasmic. Residues Phe294–Trp313 form a helical membrane-spanning segment. Residues Ser314–Thr331 are Extracellular-facing. A helical transmembrane segment spans residues Ile332–Phe351. The Cytoplasmic segment spans residues Ser352–Thr418. 2 S-palmitoyl cysteine lipidation sites follow: Cys365 and Cys366. The interval Asp377–Ser410 is disordered. Residues Arg383–Gly399 show a composition bias toward polar residues. Ser404 carries the phosphoserine modification.

The protein belongs to the G-protein coupled receptor 1 family. Vasopressin/oxytocin receptor subfamily.

The protein localises to the cell membrane. Functionally, receptor for arginine vasopressin. The activity of this receptor is mediated by G proteins which activate a phosphatidyl-inositol-calcium second messenger system. Has been involved in social behaviors, including affiliation and attachment. The sequence is that of Vasopressin V1a receptor (AVPR1A) from Homo sapiens (Human).